Here is a 440-residue protein sequence, read N- to C-terminus: Golgi reassembly-stacking protein 1 (440 aa).

Residue G2 is the site of N-myristoyl glycine attachment. PDZ GRASP-type domains follow at residues 15 to 105 and 111 to 199; these read EGFH…FCSF and QVWH…YGYL. The tract at residues 15–215 is GRASP; the sequence is EGFHLHGVQE…PPSYHKKPPG (201 aa). Residues H18, H20, and C103 each coordinate Zn(2+). The segment at 190–202 is essential for interaction with GOLGA2/GM130; that stretch reads LGCGIGYGYLHRI. Disordered stretches follow at residues 205 to 248, 261 to 301, and 327 to 440; these read QPPS…ETGS, PGSS…PVQR, and LPSS…STTE. The span at 214–239 shows a compositional bias: pro residues; that stretch reads PGTPPPSALPLGAPPPDALPPGPTPE. Position 216 is a phosphothreonine (T216). The segment covering 327 to 336 has biased composition (low complexity); the sequence is LPSSTELTTT. Polar residues predominate over residues 337 to 351; sequence AVSTSGPEDICSSSS. Phosphoserine occurs at positions 362, 364, and 373.

This sequence belongs to the GORASP family. Homodimer. Forms higher-order oligomers under interphase but not mitotic conditions. Dimers of the protein on one membrane might be able to interact with dimers on another and so stack cisternae. Interacts with the C-terminus of GOLGA2/GM130 under both mitotic and non-mitotic conditions. The interaction is critical for the correct targeting of both proteins to the cis-Golgi. Interacts with TMED2 and TMED3. Post-translationally, phosphorylated by CDC2/B1 and PLK kinases during mitosis. Phosphorylation cycle correlates with the cisternal stacking cycle. Phosphorylation of the homodimer prevents the association of dimers into higher-order oligomers, leading to cisternal unstacking. In terms of processing, target for caspase-3 cleavage during apoptosis. The cleavage contributes to Golgi fragmentation and occurs very early in the execution phase of apoptosis. Myristoylated.

It is found in the golgi apparatus. The protein resides in the cis-Golgi network membrane. Its subcellular location is the endoplasmic reticulum-Golgi intermediate compartment membrane. Its function is as follows. Key structural protein of the Golgi apparatus. The membrane cisternae of the Golgi apparatus adhere to each other to form stacks, which are aligned side by side to form the Golgi ribbon. Acting in concert with GORASP2/GRASP55, is required for the formation and maintenance of the Golgi ribbon, and may be dispensable for the formation of stacks. However, other studies suggest that GORASP1 plays an important role in assembly and membrane stacking of the cisternae, and in the reassembly of Golgi stacks after breakdown during mitosis. Caspase-mediated cleavage of GORASP1 is required for fragmentation of the Golgi during apoptosis. Also mediates, via its interaction with GOLGA2/GM130, the docking of transport vesicles with the Golgi membranes. Mediates ER stress-induced unconventional (ER/Golgi-independent) trafficking of core-glycosylated CFTR to cell membrane. This is Golgi reassembly-stacking protein 1 (GORASP1) from Homo sapiens (Human).